The sequence spans 96 residues: Probable RNA-binding protein YqeI (96 aa).

Positions 1-96 (MLTGKQKRFL…SKENKQIELP (96 aa)) constitute a CRM domain.

In Bacillus subtilis (strain 168), this protein is Probable RNA-binding protein YqeI (yqeI).